Consider the following 1703-residue polypeptide: Stress response protein NST1 (1703 aa).

Disordered regions lie at residues 1–91 (MAKS…AKDA), 243–288 (DQPL…PLPP), 347–484 (HALR…IWST), 566–724 (VSSG…GLGS), 759–807 (MHRE…EQRM), 843–1292 (LREL…LGAP), 1353–1407 (FSPM…IGPI), 1424–1465 (HTGA…DIID), 1516–1537 (SSFS…NGGG), 1558–1581 (ASTP…PWAR), 1595–1637 (EQPG…HHQL), and 1672–1703 (GAPG…GSHE). A compositionally biased stretch (low complexity) spans 7-36 (PRSTPAARAAAVPPPRLAAAAQQQHHQQQP). Positions 37–48 (PSTPPAPVPPTK) are enriched in pro residues. Over residues 57–66 (PPRSASPVSN) the composition is skewed to polar residues. Residues 77–86 (AKKKKKKSKS) show a composition bias toward basic residues. The segment covering 253 to 273 (NTANNAHPTNVNGAYGQYSSS) has biased composition (polar residues). Residues 274-288 (PNPPPTQPPVEPLPP) show a composition bias toward pro residues. Over residues 365–376 (SKNKKKKKKKKG) the composition is skewed to basic residues. Over residues 384–393 (HGDDEAHEIE) the composition is skewed to basic and acidic residues. Over residues 396–409 (VPPPKPVPNHPPPS) the composition is skewed to pro residues. 2 stretches are compositionally biased toward low complexity: residues 410-419 (TNVSSVARNS) and 453-464 (SSNSGKRSVSSS). Residues 572-581 (IPPPPGPGPF) are compositionally biased toward pro residues. Basic residues predominate over residues 614-650 (THTHTHAHTHTHTHTHTHTHTHAHQHPHPHPHGRKAS). Acidic residues predominate over residues 657-690 (DGYDDDELDDDAEYDDDDDDADYDDEDEDDDVEL). The segment covering 691–703 (EKERAREDYDKRN) has biased composition (basic and acidic residues). Positions 748–1031 (LEMMEQLAER…AKQAAAAASR (284 aa)) form a coiled coil. A compositionally biased stretch (acidic residues) spans 771-802 (ASDDEDDVDGPDDVDDEDLDEEDEDEEDEILT). Basic and acidic residues-rich tracts occupy residues 853–866 (EKAR…ESQK), 874–896 (QREA…EAEV), and 904–1023 (RDAE…REAK). Low complexity-rich tracts occupy residues 1024–1037 (QAAA…SAAQ) and 1111–1135 (AGGL…AVGS). The span at 1138-1148 (PAPPQGLPPRP) shows a compositional bias: pro residues. Residues 1158–1167 (SSSQTSSVSV) are compositionally biased toward low complexity. The span at 1200–1219 (LNAQSNVPMPSAKTPGSSIS) shows a compositional bias: polar residues. A compositionally biased stretch (low complexity) spans 1269-1291 (QNSGMFGSNGSMSSSLQSPSLGA). Low complexity predominate over residues 1431–1444 (GRSSSTTSGSGATS). Positions 1598–1619 (GGNGVGAGSNGGTPSGLGGIGG) are enriched in gly residues.

It belongs to the NST1 family.

It is found in the cytoplasm. In terms of biological role, may act as a negative regulator of salt tolerance. The polypeptide is Stress response protein NST1 (NST1) (Mycosarcoma maydis (Corn smut fungus)).